A 494-amino-acid chain; its full sequence is Guanosine-5'-triphosphate,3'-diphosphate pyrophosphatase (494 aa).

Belongs to the GppA/Ppx family. GppA subfamily.

The enzyme catalyses guanosine 3'-diphosphate 5'-triphosphate + H2O = guanosine 3',5'-bis(diphosphate) + phosphate + H(+). Its pathway is purine metabolism; ppGpp biosynthesis; ppGpp from GTP: step 2/2. In terms of biological role, catalyzes the conversion of pppGpp to ppGpp. Guanosine pentaphosphate (pppGpp) is a cytoplasmic signaling molecule which together with ppGpp controls the 'stringent response', an adaptive process that allows bacteria to respond to amino acid starvation, resulting in the coordinated regulation of numerous cellular activities. In Shigella dysenteriae serotype 1 (strain Sd197), this protein is Guanosine-5'-triphosphate,3'-diphosphate pyrophosphatase.